The primary structure comprises 432 residues: Acyl-CoA dehydrogenase AFT10-1 (432 aa).

This sequence belongs to the acyl-CoA dehydrogenase family. It depends on FAD as a cofactor.

The protein operates within mycotoxin biosynthesis. Acyl-CoA dehydrogenase; part of the gene clusters that mediate the biosynthesis of the host-selective toxins (HSTs) AF-toxins responsible for Alternaria black spot of strawberry disease by the strawberry pathotype. AF-toxin I and III are valine derivatives of 2,3-dyhydroxy-isovaleric acid and 2-hydroxy-isovaleric acid respectively, while AF II is an isoleucine derivative of 2-hydroxy-valeric acid. These derivatives are bound to a 9,10-epoxy-8-hydroxy-9-methyl-decatrienoic acid (EDA) moiety. On cellular level, AF-toxins affect plasma membrane of susceptible cells and cause a sudden increase in loss of K(+) after a few minutes of toxin treatment. The aldo-keto reductase AFTS1 catalyzes the conversion of 2-keto-isovaleric acid (2-KIV) to 2-hydroxy-isovaleric acid (2-HIV) by reduction of its ketone to an alcohol. The acyl-CoA ligase AFT1, the hydrolase AFT2 and the enoyl-CoA hydratases AFT3 and AFT6, but also the polyketide synthase AFT9, the acyl-CoA dehydrogenase AFT10, the cytochrome P450 monooxygenase AFT11 and the oxidoreductase AFT12 are all involved in the biosynthesis of the AK-, AF- and ACT-toxin common EDA structural moiety. The exact function of each enzyme, and of additional enzymes identified within the AF-toxin clusters have still to be determined. This chain is Acyl-CoA dehydrogenase AFT10-1, found in Alternaria alternata (Alternaria rot fungus).